A 210-amino-acid chain; its full sequence is Calaxin (210 aa).

EF-hand domains lie at 64-99, 100-135, and 145-180; these read TDDMMTDRVCRVIDKDNDGYLSVKEWVEALSVFLRG, TLDEKMKYCFEVYDLNGDGYISREEMFQMLKDSLIR, and GIKDIVEIALKKMDYDHDGRVSYADFEKTVMDENLL. Ca(2+) is bound by residues D77, D79, D81, Y83, E88, D113, N115, D117, Y119, E124, D158, D160, D162, R164, and D169.

In terms of assembly, component of the outer dynein arm-docking complex along with ODAD1, ODAD2, ODAD3 and ODAD4.

It localises to the cytoplasm. The protein localises to the cytoskeleton. It is found in the cilium axoneme. The protein resides in the cell projection. Its subcellular location is the cilium. It localises to the flagellum. Component of the outer dynein arm-docking complex (ODA-DC) that mediates outer dynein arms (ODA) binding onto the doublet microtubule. Seems to regulate the assembly of both ODAs and their axonemal docking complex onto ciliary microtubules. Regulates ciliary and flagellar motility and is required for cilia-driven determination of body laterality. In terms of biological role, regulates ciliary motility and is required for cilia-driven determination of body laterality. This chain is Calaxin (clxn), found in Danio rerio (Zebrafish).